Reading from the N-terminus, the 498-residue chain is MEYLLALDQGTSSSRAIVFNRAGQIVASAQQEFPQHFPQPGWVEHDPFDIWNSQLATCRAALEQAKLSAADMAALGITNQRETTMVWERATGKPIFNAIVWQDRRTEAICESLRAEGLEDEVRKRTGLIIDPYFSATKLRWILDHVDGGRERAARGELAFGTIDSWLVWQLTRGRLHVTDVSNASRTMLWNIHTGEWDADLMRALDIHPSLLPEVHPSAHQFGQTDADWLGASLTIGGIAGDQQSALFGQACFKPGMAKNTYGTGCFMLLNTGDKAVQSHNGLISTAACQSGTKRSYALEGSVFVGGAVVQWLRDGLRAIQRSADVEGLAASVPDSGGVVFVPSFTGLGAPYWDPTAQGAIVGLSRGTTIGHIARAALESIAFQSTALLQAMTRDAVSTISELRVDGGASANNLLLQFQADLLGIPVVRPEIIETTALGAAYLAGIATGFYRDEAEVAQQWRASRTFHPVISRDEAAHRIAQWEMAVAQVRLPTTRGH.

Thr11 provides a ligand contact to ADP. Positions 11, 12, and 13 each coordinate ATP. Thr11 lines the sn-glycerol 3-phosphate pocket. Arg15 is an ADP binding site. Arg81, Glu82, Tyr133, and Asp242 together coordinate sn-glycerol 3-phosphate. Residues Arg81, Glu82, Tyr133, Asp242, and Gln243 each contribute to the glycerol site. Residues Thr264 and Gly307 each contribute to the ADP site. Residues Thr264, Gly307, Gln311, and Gly408 each contribute to the ATP site. The ADP site is built by Gly408 and Asn412.

The protein belongs to the FGGY kinase family.

It catalyses the reaction glycerol + ATP = sn-glycerol 3-phosphate + ADP + H(+). The protein operates within polyol metabolism; glycerol degradation via glycerol kinase pathway; sn-glycerol 3-phosphate from glycerol: step 1/1. Inhibited by fructose 1,6-bisphosphate (FBP). Key enzyme in the regulation of glycerol uptake and metabolism. Catalyzes the phosphorylation of glycerol to yield sn-glycerol 3-phosphate. This is Glycerol kinase from Ralstonia pickettii (strain 12J).